Consider the following 276-residue polypeptide: Halorhodopsin (276 aa).

Positions 1-21 (MTAVSTTATTVLQATQSDVLQ) are excised as a propeptide. The Extracellular portion of the chain corresponds to 22 to 25 (EIQS). The chain crosses the membrane as a helical span at residues 26–51 (NFLLNSSIWVNIALAGVVILLFVAMG). Residues 52–57 (RDLESP) are Cytoplasmic-facing. The chain crosses the membrane as a helical span at residues 58 to 81 (RAKLIWVATMLVPLVSISSYAGLA). Residues 82–105 (SGLTVGFLQMPPGHALAGQEVLSP) lie on the Extracellular side of the membrane. A helical transmembrane segment spans residues 106-127 (WGRYLTWTFSTPMILLALGLLA). Residues 128-130 (DTD) are Cytoplasmic-facing. The helical transmembrane segment at 131–154 (IASLFTAITMDIGMCVTGLAAALI) threads the bilayer. Over 155 to 157 (TSS) the chain is Extracellular. Residues 158–180 (HLLRWVFYGISCAFFVAVLYVLL) form a helical membrane-spanning segment. Residues 181-192 (VQWPADAEAAGT) are Cytoplasmic-facing. The helical transmembrane segment at 193–216 (SEIFGTLKILTVVLWLGYPILWAL) threads the bilayer. Over 217 to 225 (GSEGVALLS) the chain is Extracellular. Residues 226 to 254 (VGVTSWGYSGLDILAKYVFAFLLLRWVAA) form a helical membrane-spanning segment. Lys-241 bears the N6-(retinylidene)lysine mark. Topologically, residues 255–276 (NEGTVSGSGMGIGSGGAAPADD) are cytoplasmic.

It belongs to the archaeal/bacterial/fungal opsin family.

The protein resides in the cell membrane. Functionally, light-driven anion pump. This is Halorhodopsin from Halobacterium halobium (strain shark).